The primary structure comprises 703 residues: Calpain-8 (703 aa).

The Calpain catalytic domain occupies 45 to 344 (LFKDPEFPAC…FSRLEICNLS (300 aa)). Catalysis depends on residues Cys-105, His-262, and Asn-286. Residues 355 to 512 (KWNLVLFNGR…VFSEKKAQAL (158 aa)) form a domain III region. The tract at residues 513 to 531 (EIGDAVPGDPHEPHPRDMD) is linker. 4 EF-hand domains span residues 531–566 (DGEDEHFWSLSEEFADKDSEISAHQLKRVLNGLLSK), 575–610 (FNINTCREMISLLDGDGTGSLRPVEFKTLWLKICKY), 605–640 (LKICKYLEIYQEMDHSRAGTIDAHEMRTALKKAGFT), and 670–703 (IRLEILFKLFRLLDKDQNGIVQLSLAEWLCRALV). The domain IV stretch occupies residues 532–703 (GEDEHFWSLS…LAEWLCRALV (172 aa)). Asp-588, Asp-590, Thr-592, Ser-594, Glu-599, Asp-618, Ser-620, Thr-624, and Glu-629 together coordinate Ca(2+).

This sequence belongs to the peptidase C2 family. Monomer and homooligomer. Interacts with COPS1/GPS1, COPB1, EYA2, NME2, NME4 and TOMM70. Requires Ca(2+) as cofactor. Post-translationally, undergoes autolytic cleavage between Ala-5 and Ala-6 which gives rise to fragments extending from Ala-6 to the C-terminus, Ala-6 to the EF-hand 2 domain and from Ala-6 to the beginning of domain III. In terms of tissue distribution, predominantly expressed in the stomach. Localizes strictly to the surface mucus cells in the gastric epithelium and the mucus-secreting goblet cells in the duodenum.

It localises to the cytoplasm. Its subcellular location is the golgi apparatus. It carries out the reaction Broad endopeptidase specificity.. The concentration of calcium for half-maximal activity is 0.3 mM. Inhibited by calpastatin and calpeptin. Calcium-regulated non-lysosomal thiol-protease. Involved in membrane trafficking in the gastric surface mucus cells (pit cells) and may involve the membrane trafficking of mucus cells via interactions with coat protein. Proteolytically cleaves the beta-subunit of coatomer complex. This chain is Calpain-8 (Capn8), found in Mus musculus (Mouse).